A 1018-amino-acid polypeptide reads, in one-letter code: Unconventional myosin-Ig (1018 aa).

M1 carries the N-acetylmethionine modification. The 699-residue stretch at 9-707 (YGKPDFVLLD…TLVTLEQSRA (699 aa)) folds into the Myosin motor domain. 102-109 (GESGAGKT) contributes to the ATP binding site. Positions 584 to 606 (MVALVENLASKEPFYVRCIKPNE) are actin-binding. One can recognise an IQ domain in the interval 710-739 (IPIIVLLLQKAWRGTLARWRCRRLRAIYTI). The TH1 domain maps to 824 to 1017 (GLRQDWGCRR…RGSFTLLWPS (194 aa)).

It belongs to the TRAFAC class myosin-kinesin ATPase superfamily. Myosin family. In terms of assembly, interacts with calmodulin; via its IQ motifs. As to expression, specifically expressed in hematopoietic cells.

Its subcellular location is the cell membrane. It localises to the cell projection. It is found in the phagocytic cup. Its function is as follows. Unconventional myosin required during immune response for detection of rare antigen-presenting cells by regulating T-cell migration. Unconventional myosins are actin-based motor molecules with ATPase activity and serve in intracellular movements. Acts as a regulator of T-cell migration by generating membrane tension, enforcing cell-intrinsic meandering search, thereby enhancing detection of rare antigens during lymph-node surveillance, enabling pathogen eradication. Also required in B-cells, where it regulates different membrane/cytoskeleton-dependent processes. Involved in Fc-gamma receptor (Fc-gamma-R) phagocytosis. In terms of biological role, constitutes the minor histocompatibility antigen HA-2. More generally, minor histocompatibility antigens (mHags) refer to immunogenic peptide which, when complexed with MHC, can generate an immune response after recognition by specific T-cells. The peptides are derived from polymorphic intracellular proteins, which are cleaved by normal pathways of antigen processing. The binding of these peptides to MHC class I or class II molecules and their expression on the cell surface can stimulate T-cell responses and thereby trigger graft rejection or graft-versus-host disease (GVHD) after hematopoietic stem cell transplantation from HLA-identical sibling donor. GVHD is a frequent complication after bone marrow transplantation (BMT), due to mismatch of minor histocompatibility antigen in HLA-matched sibling marrow transplants. HA-2 is restricted to MHC class I HLA-A*0201. The protein is Unconventional myosin-Ig (MYO1G) of Homo sapiens (Human).